Here is a 196-residue protein sequence, read N- to C-terminus: dITP/XTP pyrophosphatase (196 aa).

Position 8-13 (8-13) interacts with substrate; it reads TKNEGK. Mg(2+) contacts are provided by E41 and D70. Residue D70 is the Proton acceptor of the active site. Residues S71, 153–156, K176, and 181–182 each bind substrate; these read FGYD and HR.

The protein belongs to the HAM1 NTPase family. As to quaternary structure, homodimer. It depends on Mg(2+) as a cofactor.

It catalyses the reaction XTP + H2O = XMP + diphosphate + H(+). It carries out the reaction dITP + H2O = dIMP + diphosphate + H(+). The enzyme catalyses ITP + H2O = IMP + diphosphate + H(+). In terms of biological role, pyrophosphatase that catalyzes the hydrolysis of nucleoside triphosphates to their monophosphate derivatives, with a high preference for the non-canonical purine nucleotides XTP (xanthosine triphosphate), dITP (deoxyinosine triphosphate) and ITP. Seems to function as a house-cleaning enzyme that removes non-canonical purine nucleotides from the nucleotide pool, thus preventing their incorporation into DNA/RNA and avoiding chromosomal lesions. In Bacillus licheniformis (strain ATCC 14580 / DSM 13 / JCM 2505 / CCUG 7422 / NBRC 12200 / NCIMB 9375 / NCTC 10341 / NRRL NRS-1264 / Gibson 46), this protein is dITP/XTP pyrophosphatase.